Reading from the N-terminus, the 117-residue chain is Large ribosomal subunit protein uL18 (117 aa).

Belongs to the universal ribosomal protein uL18 family. As to quaternary structure, part of the 50S ribosomal subunit; part of the 5S rRNA/L5/L18/L25 subcomplex. Contacts the 5S and 23S rRNAs.

In terms of biological role, this is one of the proteins that bind and probably mediate the attachment of the 5S RNA into the large ribosomal subunit, where it forms part of the central protuberance. This is Large ribosomal subunit protein uL18 from Nitrosococcus oceani (strain ATCC 19707 / BCRC 17464 / JCM 30415 / NCIMB 11848 / C-107).